The primary structure comprises 829 residues: RNA-directed RNA polymerase (829 aa).

Residues Met-1–Arg-39 form a disordered region.

Forms a ribonucleoprotein complex with the 20S RNA, where a single polymerase molecule binds to a single viral RNA genome. Since the viral RNA is not encapsidated, ribonucleoprotein complex formation appears to be the strategy to survive in the host as persistent virus.

It is found in the host cytoplasm. It carries out the reaction RNA(n) + a ribonucleoside 5'-triphosphate = RNA(n+1) + diphosphate. Functionally, RNA-directed RNA polymerase that replicates the viral (+) and (-) genome. In Saccharomyces cerevisiae (Baker's yeast), this protein is RNA-directed RNA polymerase.